The following is an 849-amino-acid chain: Leucine--tRNA ligase (849 aa).

Residues 44-54 (PYPSGRIHMGH) carry the 'HIGH' region motif. A 'KMSKS' region motif is present at residues 620 to 624 (KMSKS). Lys623 contacts ATP.

The protein belongs to the class-I aminoacyl-tRNA synthetase family.

The protein localises to the cytoplasm. The enzyme catalyses tRNA(Leu) + L-leucine + ATP = L-leucyl-tRNA(Leu) + AMP + diphosphate. In Sphingopyxis alaskensis (strain DSM 13593 / LMG 18877 / RB2256) (Sphingomonas alaskensis), this protein is Leucine--tRNA ligase.